A 154-amino-acid polypeptide reads, in one-letter code: Peptide deformylase (154 aa).

Fe cation-binding residues include cysteine 90 and histidine 132. Glutamate 133 is an active-site residue. Residue histidine 136 coordinates Fe cation.

The protein belongs to the polypeptide deformylase family. It depends on Fe(2+) as a cofactor.

The enzyme catalyses N-terminal N-formyl-L-methionyl-[peptide] + H2O = N-terminal L-methionyl-[peptide] + formate. Its function is as follows. Removes the formyl group from the N-terminal Met of newly synthesized proteins. Requires at least a dipeptide for an efficient rate of reaction. N-terminal L-methionine is a prerequisite for activity but the enzyme has broad specificity at other positions. This is Peptide deformylase from Desulforudis audaxviator (strain MP104C).